Here is a 390-residue protein sequence, read N- to C-terminus: Probable splicing factor YJU2B (390 aa).

Residues 354-390 (DACKASSSSEEENSIDSCATGKSLVADYSDSDSGSEV) form a disordered region.

It belongs to the CWC16 family.

Its subcellular location is the nucleus. In terms of biological role, may be involved in mRNA splicing. This Danio rerio (Zebrafish) protein is Probable splicing factor YJU2B (yju2b).